We begin with the raw amino-acid sequence, 206 residues long: Putative transporter protein AmiS2 (206 aa).

The next 7 helical transmembrane spans lie at 4–24 (VGLL…LGTV), 29–49 (ASVL…VMLI), 56–76 (SAVL…YVGI), 86–106 (GIGW…FLSF), 113–133 (VFGV…LVLG), 142–162 (FTGW…AFLI), and 173–193 (VAAG…ILAA).

This sequence belongs to the AmiS/UreI family.

The protein resides in the cell membrane. Its function is as follows. Possible transporter that might be responsible for the adsorption of amidase substrates or release of their hydrolysis products. This chain is Putative transporter protein AmiS2 (amiS2), found in Rhodococcus erythropolis (Arthrobacter picolinophilus).